The following is a 136-amino-acid chain: S-protein homolog 6 (136 aa).

An N-terminal signal peptide occupies residues 1 to 17 (MFIIIFIVLISLIGCET). Residues Asn-76 and Asn-108 are each glycosylated (N-linked (GlcNAc...) asparagine).

Belongs to the plant self-incompatibility (S1) protein family.

Its subcellular location is the secreted. This is S-protein homolog 6 from Arabidopsis thaliana (Mouse-ear cress).